The following is a 257-amino-acid chain: tRNA (guanine-N(7)-)-methyltransferase (257 aa).

Positions 1–12 are enriched in acidic residues; sequence MARDSEDQDMET. Residues 1-25 are disordered; sequence MARDSEDQDMETETNGAAEGLDPTS. Residues glycine 80, 103-104, 138-139, and leucine 158 each bind S-adenosyl-L-methionine; these read EI and NA. The active site involves aspartate 161. An S-adenosyl-L-methionine-binding site is contributed by 236–238; that stretch reads SEE.

It belongs to the class I-like SAM-binding methyltransferase superfamily. TrmB family.

The protein localises to the nucleus. It catalyses the reaction guanosine(46) in tRNA + S-adenosyl-L-methionine = N(7)-methylguanosine(46) in tRNA + S-adenosyl-L-homocysteine. It functions in the pathway tRNA modification; N(7)-methylguanine-tRNA biosynthesis. Functionally, catalyzes the formation of N(7)-methylguanine at position 46 (m7G46) in tRNA. This chain is tRNA (guanine-N(7)-)-methyltransferase, found in Drosophila ananassae (Fruit fly).